Consider the following 577-residue polypeptide: MMKIRHKNKKPGKGSKGCKKPARQNGKKVTSRPSSAPQIVHGNDHASREAELKKKRVEEMREKQQVAREQERQRHRTMESYCQDVLKRQQEFEQKEEVLQELNMFPQLDDEATRKAYYKEFRKVVEYSDVILEVLDARDPLGCRCFQMEETVLRAEGNKKLVLVLNKIDLVPKEIVEKWLEYLLNELPTVAFKASTQHHQVKNLTRCKVPVDQASESLLKSRACFGAENLMRVLGNYCRLGEVRGHIRVGVVGLPNVGKSSLINSLKRSRACSVGAVPGVTKFMQEVYLDKFIRLLDAPGIVPGPNSEVGTILRNCIHVQKLADPVTPVETILQRCNLEEISSYYGVSGFQTTEHFLTAVAHRLGKKKKGGVYSQEQAAKAVLADWVSGKISFYTLPPPTHTLPTHLSAEIVKEMTEVFDIEDTEHANEDTMECLAVGESDELLGDMDPQEMEVRWLHSPLVKIADAIENRSTVYKIGNLTGYCTKPNRNQMGWPKRNVDHHCPQNNRVVEVSSVDRRPMLQRILETDPLQQGQALASALKNKKKLQKRSDKIATKLSDSMMSMLDLSGNSDDCAGD.

Basic residues predominate over residues 1–30 (MMKIRHKNKKPGKGSKGCKKPARQNGKKVT). The segment at 1–75 (MMKIRHKNKK…VAREQERQRH (75 aa)) is disordered. Residues 9–28 (KKPGKGSKGCKKPARQNGKK) are required for nucleolar localization. Over residues 42–75 (GNDHASREAELKKKRVEEMREKQQVAREQERQRH) the composition is skewed to basic and acidic residues. Residues 43 to 103 (NDHASREAEL…QKEEVLQELN (61 aa)) are a coiled coil. The CP-type G domain occupies 118-304 (YKEFRKVVEY…LLDAPGIVPG (187 aa)). Residues 166–169 (NKID), 253–260 (GLPNVGKS), and 297–300 (DAPG) each bind GTP.

It belongs to the TRAFAC class YlqF/YawG GTPase family. As to quaternary structure, interacts with MDM2; this interaction, which occurs in the nucleoplasm, stabilizes MDM2. Indirectly interacts with TP53, via MDM2-binding. Interacts with TERF1; this interaction probably occurs in the nucleoplasm and is increased during mitosis, when the nucleolus is disassembled. This binding may promote TERF1 homodimerization. Interacts with TERT.

It localises to the nucleus. Its subcellular location is the nucleolus. Functionally, stabilizes TERF1 telomeric association by preventing TERF1 recruitment by PML. Stabilizes TERF1 protein by preventing its ubiquitination and hence proteasomal degradation. Does so by interfering with TERF1-binding to FBXO4 E3 ubiquitin-protein ligase. Required for cell proliferation. By stabilizing TRF1 protein during mitosis, promotes metaphase-to-anaphase transition. Stabilizes MDM2 protein by preventing its ubiquitination, and hence proteasomal degradation. By acting on MDM2, may affect TP53 activity. Required for normal processing of ribosomal pre-rRNA. Binds GTP. In Mus musculus (Mouse), this protein is Guanine nucleotide-binding protein-like 3-like protein (Gnl3l).